We begin with the raw amino-acid sequence, 64 residues long: Sperm protamine P1 (64 aa).

Residues 1 to 64 are disordered; sequence MARYRHSRSR…SRRRRRRYYY (64 aa).

It belongs to the protamine P1 family. In terms of tissue distribution, testis.

The protein resides in the nucleus. It localises to the chromosome. In terms of biological role, protamines substitute for histones in the chromatin of sperm during the haploid phase of spermatogenesis. They compact sperm DNA into a highly condensed, stable and inactive complex. The sequence is that of Sperm protamine P1 (PRM1) from Hypsiprymnodon moschatus (Musky rat kangaroo).